Consider the following 459-residue polypeptide: Ribulose bisphosphate carboxylase/oxygenase activase, chloroplastic (459 aa).

Residue 164-171 coordinates ATP; it reads GGKGQGKS.

The protein belongs to the RuBisCO activase family.

Its subcellular location is the plastid. The protein resides in the chloroplast stroma. Functionally, activation of RuBisCO (ribulose-1,5-bisphosphate carboxylase/oxygenase; EC 4.1.1.39) involves the ATP-dependent carboxylation of the epsilon-amino group of lysine leading to a carbamate structure. The protein is Ribulose bisphosphate carboxylase/oxygenase activase, chloroplastic of Solanum pennellii (Tomato).